Here is a 629-residue protein sequence, read N- to C-terminus: Probable alpha-L-arabinofuranosidase A (629 aa).

The signal sequence occupies residues 1 to 25; that stretch reads MVALSTLSGLSALPFLFSLVQNVYG. N36, N51, N140, N152, N168, N171, N260, N494, and N534 each carry an N-linked (GlcNAc...) asparagine glycan.

Belongs to the glycosyl hydrolase 51 family.

Its subcellular location is the secreted. The catalysed reaction is Hydrolysis of terminal non-reducing alpha-L-arabinofuranoside residues in alpha-L-arabinosides.. It participates in glycan metabolism; L-arabinan degradation. Functionally, alpha-L-arabinofuranosidase involved in the degradation of arabinoxylan, a major component of plant hemicellulose. Acts only on small linear 1,5-alpha-linked L-arabinofuranosyl oligosaccharides. This is Probable alpha-L-arabinofuranosidase A (abfA) from Aspergillus oryzae (strain ATCC 42149 / RIB 40) (Yellow koji mold).